A 119-amino-acid polypeptide reads, in one-letter code: Urotensin-2B (119 aa).

Residues 1–28 form the signal peptide; sequence MNKILSSTVCFGLLTLLSVLSFLQSVHG. Residues 29–109 constitute a propeptide that is removed on maturation; it reads RPYLTQGNEI…VDGLFSSHPS (81 aa). Residues Cys-113 and Cys-118 are joined by a disulfide bond.

This sequence belongs to the urotensin-2 family.

Its subcellular location is the secreted. Potent vasoconstrictor. This is Urotensin-2B (UTS2B) from Homo sapiens (Human).